Here is a 312-residue protein sequence, read N- to C-terminus: Pectin lyase (312 aa).

The active site involves Arg-201. The tract at residues 254-274 (GSGTFTDTNSVPPITNQKSPK) is disordered. Positions 256–274 (GTFTDTNSVPPITNQKSPK) are enriched in polar residues.

The protein belongs to the polysaccharide lyase 1 family.

The enzyme catalyses Eliminative cleavage of (1-&gt;4)-alpha-D-galacturonan methyl ester to give oligosaccharides with 4-deoxy-6-O-methyl-alpha-D-galact-4-enuronosyl groups at their non-reducing ends.. The protein is Pectin lyase (pnl) of Pseudomonas marginalis (Pseudomonas panacis).